Consider the following 427-residue polypeptide: uncharacterized protein (427 aa).

Residues 135-168 (PILKQKLVSLESKVKKIDKEMEKHNDLLKEIQEN) adopt a coiled-coil conformation.

This is an uncharacterized protein from Arabidopsis thaliana (Mouse-ear cress).